The primary structure comprises 580 residues: Arrestin domain-containing protein A (580 aa).

N-linked (GlcNAc...) asparagine glycosylation is found at Asn-27, Asn-33, and Asn-60. Residues 31-54 (NVNTTSSHHHHHSNSGNAEVSFNG) form a disordered region. Disordered regions lie at residues 67–86 (ETHS…EISI) and 95–114 (MTMS…HKES). Residues 118–138 (NLSLGGIVGAVVGAVTGGVMI) traverse the membrane as a helical segment. Asn-149, Asn-341, and Asn-342 each carry an N-linked (GlcNAc...) asparagine glycan. The FYVE-type zinc-finger motif lies at 468–528 (DEHATACRKC…VCEECYPIAT (61 aa)). Residues Cys-474, Cys-477, Cys-490, Cys-493, Cys-498, Cys-501, Cys-520, and Cys-523 each contribute to the Zn(2+) site.

This sequence belongs to the arrestin family.

It is found in the membrane. In Dictyostelium discoideum (Social amoeba), this protein is Arrestin domain-containing protein A (adcA).